Reading from the N-terminus, the 239-residue chain is Orotidine 5'-phosphate decarboxylase (239 aa).

Substrate contacts are provided by residues Asp-11, Lys-33, 60-69 (DLKLHDIPTT), Thr-123, Arg-185, Gln-194, Gly-214, and Arg-215. Lys-62 serves as the catalytic Proton donor.

Belongs to the OMP decarboxylase family. Type 1 subfamily. Homodimer.

The catalysed reaction is orotidine 5'-phosphate + H(+) = UMP + CO2. It participates in pyrimidine metabolism; UMP biosynthesis via de novo pathway; UMP from orotate: step 2/2. Functionally, catalyzes the decarboxylation of orotidine 5'-monophosphate (OMP) to uridine 5'-monophosphate (UMP). This Bacillus subtilis (strain 168) protein is Orotidine 5'-phosphate decarboxylase (pyrF).